A 469-amino-acid chain; its full sequence is MSHQQPLSSSVQPTDIYGGDEVSALVLDPGYCNTRAGYAGEEMPKQVLPSFYGHINGRDVFGDEYIVPKPGFEVRNYMNRDSVVEDWDAATRMWEHVLVKRLQPERSTPPSKKGINISDDGDVPMEDDGNNNEDATDALEKPLAENPLLMTEAPWNSPKAREKAIEISMETWGVPAFWLSKTPVLAAFAAGKATALVIDVGGANTSVTAIHDGMVLKRSIQRSPVGGVWLSSQICKMWDGSEPKVDVVPRFMVESKKPVEAGAPAEANLRKFNFDIHPSFRAYEEERVLTEFKESVVEVWRGPQRFTTPGNEDAVRTQPGRVFEMPDGSNQMWREQRFKVSEGMWDETAAYNSTDEEGRVTKAQTIPALIKAALEGVDVDLRPNILGNVVVTGSTSLLNGFNDRLNHELAQMYPGVKIKIHAAGLTTERRFGAWIGGSILASLGTFHQMWISRKEYDENGAGIVEKRCK.

Residues Pro104–Thr136 form a disordered region. A compositionally biased stretch (acidic residues) spans Asp119–Thr136.

This sequence belongs to the actin family. ARP4 subfamily. In terms of assembly, component of the NuA4 histone acetyltransferase complex, of the INO80 chromatin remodeling complex, and of the SWR1 chromatin remodeling complex.

The protein localises to the nucleus. Chromatin interaction component of the NuA4 histone acetyltransferase complex which is involved in transcriptional activation of selected genes principally by acetylation of nucleosomal histone H4 and H2A. The NuA4 complex is also involved in DNA repair. Is required for NuA4 complex integrity. Component of the SWR1 complex which mediates the ATP-dependent exchange of histone H2A for the H2A variant H2A.Z leading to transcriptional regulation of selected genes by chromatin remodeling. Component of the INO80 complex which remodels chromatin by shifting nucleosomes and is involved in DNA repair. This is Actin-related protein 4 (arp-4) from Neurospora crassa (strain ATCC 24698 / 74-OR23-1A / CBS 708.71 / DSM 1257 / FGSC 987).